Here is a 391-residue protein sequence, read N- to C-terminus: NAD(P)H-quinone oxidoreductase subunit H, chloroplastic (391 aa).

This sequence belongs to the complex I 49 kDa subunit family. In terms of assembly, NDH is composed of at least 16 different subunits, 5 of which are encoded in the nucleus.

It localises to the plastid. Its subcellular location is the chloroplast thylakoid membrane. The catalysed reaction is a plastoquinone + NADH + (n+1) H(+)(in) = a plastoquinol + NAD(+) + n H(+)(out). It catalyses the reaction a plastoquinone + NADPH + (n+1) H(+)(in) = a plastoquinol + NADP(+) + n H(+)(out). NDH shuttles electrons from NAD(P)H:plastoquinone, via FMN and iron-sulfur (Fe-S) centers, to quinones in the photosynthetic chain and possibly in a chloroplast respiratory chain. The immediate electron acceptor for the enzyme in this species is believed to be plastoquinone. Couples the redox reaction to proton translocation, and thus conserves the redox energy in a proton gradient. This chain is NAD(P)H-quinone oxidoreductase subunit H, chloroplastic, found in Chaetosphaeridium globosum (Charophycean green alga).